The following is a 65-amino-acid chain: Large ribosomal subunit protein uL29 (65 aa).

The protein belongs to the universal ribosomal protein uL29 family.

This is Large ribosomal subunit protein uL29 from Parabacteroides distasonis (strain ATCC 8503 / DSM 20701 / CIP 104284 / JCM 5825 / NCTC 11152).